The chain runs to 142 residues: Large ribosomal subunit protein uL13 (142 aa).

It belongs to the universal ribosomal protein uL13 family. In terms of assembly, part of the 50S ribosomal subunit.

In terms of biological role, this protein is one of the early assembly proteins of the 50S ribosomal subunit, although it is not seen to bind rRNA by itself. It is important during the early stages of 50S assembly. The protein is Large ribosomal subunit protein uL13 of Syntrophotalea carbinolica (strain DSM 2380 / NBRC 103641 / GraBd1) (Pelobacter carbinolicus).